We begin with the raw amino-acid sequence, 56 residues long: Large ribosomal subunit protein bL33A (56 aa).

This sequence belongs to the bacterial ribosomal protein bL33 family.

The chain is Large ribosomal subunit protein bL33A from Nocardia farcinica (strain IFM 10152).